The primary structure comprises 1394 residues: Coiled-coil domain-containing protein 7 (1394 aa).

Residues 308 to 340 (LLDAEYKQIQRDFELLSEEKLVLENELQKLKDT) adopt a coiled-coil conformation. The tract at residues 345 to 375 (STNNRTKKAAKTVKKKDKGKSEDSEKKMSSE) is disordered. Residues 349–362 (RTKKAAKTVKKKDK) show a composition bias toward basic residues. Residues 363–375 (GKSEDSEKKMSSE) show a composition bias toward basic and acidic residues. The stretch at 383–421 (LDQVQKVARLEIENKVLQEQLKQALQEAEKAKHQLNYFL) forms a coiled coil. Disordered regions lie at residues 431 to 617 (EGKT…EVPD), 634 to 806 (EQMK…LEHQ), and 819 to 842 (NEKL…PMLK). Polar residues predominate over residues 437 to 446 (TMRVGNSQTE). Residues 447–462 (VKGEDSKTIPLEKETG) are compositionally biased toward basic and acidic residues. Over residues 464–473 (SLVSDSGGQK) the composition is skewed to polar residues. Over residues 491–500 (LIEKSSEKKR) the composition is skewed to basic and acidic residues. Polar residues-rich tracts occupy residues 503–513 (PAISDLSQILK), 521–538 (LESS…NKSP), and 546–571 (LTTV…NETV). Residues 583-600 (ESKKADVSEEQLQKKTEE) are compositionally biased toward basic and acidic residues. Positions 663 to 679 (SRSQSETKNLEATGNES) are enriched in polar residues. Positions 695–707 (QDTKSKTEVEVKK) are enriched in basic and acidic residues. The span at 711 to 721 (FQDNQLNTHNE) shows a compositional bias: polar residues. Basic and acidic residues predominate over residues 722 to 736 (VPNERLIVEHQESMS). Positions 780–790 (KEQSTLKGQRI) are enriched in polar residues. Composition is skewed to basic and acidic residues over residues 791 to 806 (TTHE…LEHQ) and 830 to 842 (THGE…PMLK).

In terms of biological role, may play a role in tumorigenesis. This chain is Coiled-coil domain-containing protein 7 (CCDC7), found in Macaca fascicularis (Crab-eating macaque).